The following is a 247-amino-acid chain: MDKILEICAGSLASCIAAQEGGAQRVELCDNLGEGGTTPSYGALAMARGRLNIALHAIIRPRGGDFLYSALEFDAMAHDVEVCRSLGLDGVVLGLLTADGDVDVARTRQLAALAGPMAVTFHRAFDLAREPEQALEDVIAAGCSRLLSSGQAASAPEGAALLARLREQAGGRLTVMPGAGVRPGNIAGLAAASGCIEFHASARGQVASAMRYRRGGVGMGASGVDEYARQETSASQVRALREALDKA.

It belongs to the CutC family.

It localises to the cytoplasm. The polypeptide is PF03932 family protein CutC (Chromobacterium violaceum (strain ATCC 12472 / DSM 30191 / JCM 1249 / CCUG 213 / NBRC 12614 / NCIMB 9131 / NCTC 9757 / MK)).